Reading from the N-terminus, the 637-residue chain is Sphingomyelin phosphodiesterase B (637 aa).

The signal sequence occupies residues 1–20 (MKVKAPILLLFVFLINFCFS). Asparagine 73 carries N-linked (GlcNAc...) asparagine glycosylation. Positions 73-155 (NGTKCDICKF…GFVGFCPYVP (83 aa)) constitute a Saposin B-type domain. Intrachain disulfides connect cysteine 77/cysteine 151, cysteine 80/cysteine 145, and cysteine 108/cysteine 119. 2 N-linked (GlcNAc...) asparagine glycosylation sites follow: asparagine 128 and asparagine 157. 2 residues coordinate Zn(2+): aspartate 191 and histidine 193. Cysteine 212 and cysteine 233 are oxidised to a cystine. Aspartate 263 provides a ligand contact to Zn(2+). N-linked (GlcNAc...) asparagine glycosylation occurs at asparagine 279. Asparagine 304 serves as a coordination point for Zn(2+). N-linked (GlcNAc...) asparagine glycosylation is present at asparagine 377. Zn(2+) contacts are provided by histidine 407, histidine 441, and histidine 443. N-linked (GlcNAc...) asparagine glycans are attached at residues asparagine 523 and asparagine 546. The cysteines at positions 582 and 595 are disulfide-linked. A glycan (N-linked (GlcNAc...) asparagine) is linked at asparagine 606.

The protein belongs to the acid sphingomyelinase family. Zn(2+) serves as cofactor.

It is found in the secreted. In terms of biological role, converts sphingomyelin to ceramide. This chain is Sphingomyelin phosphodiesterase B (sgmB), found in Dictyostelium discoideum (Social amoeba).